Reading from the N-terminus, the 124-residue chain is Small ribosomal subunit protein uS12 (124 aa).

Residues 1–32 are disordered; sequence MPTINQLVRKGRRDKTAKVKTAALKGSPQRRG. Asp-89 carries the 3-methylthioaspartic acid modification. The tract at residues 104 to 124 is disordered; sequence TQGVKGRKQARSRYGAKKEKS. Positions 108–118 are enriched in basic residues; sequence KGRKQARSRYG.

Belongs to the universal ribosomal protein uS12 family. As to quaternary structure, part of the 30S ribosomal subunit. Contacts proteins S8 and S17. May interact with IF1 in the 30S initiation complex.

Its function is as follows. With S4 and S5 plays an important role in translational accuracy. In terms of biological role, interacts with and stabilizes bases of the 16S rRNA that are involved in tRNA selection in the A site and with the mRNA backbone. Located at the interface of the 30S and 50S subunits, it traverses the body of the 30S subunit contacting proteins on the other side and probably holding the rRNA structure together. The combined cluster of proteins S8, S12 and S17 appears to hold together the shoulder and platform of the 30S subunit. This Rhodococcus jostii (strain RHA1) protein is Small ribosomal subunit protein uS12.